The following is a 716-amino-acid chain: FLYWCH-type zinc finger-containing protein 1 (716 aa).

The segment at 1-35 (MPLPEPSEQEGESVKAGQEPSPKPGTDVIPAAPRK) is disordered. Phosphoserine is present on S21. Residues 116–174 (FLRTPFGGRLLVLESFLYKQEKAVGDKVYWKCRQHAELGCRGRAITRGLRATVMRGHCH) form an FLYWCH-type 1 zinc finger. Residue K134 forms a Glycyl lysine isopeptide (Lys-Gly) (interchain with G-Cter in SUMO2) linkage. The interval 191 to 231 (PSLALPEGLGEPQGPEGPGGRVEEPLEGVGPWQCPEEPEPT) is disordered. Positions 195–204 (LPEGLGEPQG) are enriched in low complexity. S261 carries the phosphoserine modification. The FLYWCH-type 2 zinc finger occupies 273–331 (FLRTCYGGSFLVHESFLYKREKAVGDKVYWTCRDHALHGCRSRAITQGQRVTVMRGHCH). Phosphoserine is present on S371. The segment at 377-421 (GPGPLTLTRPRPRKRAKVEDQELPTQPEAPDEHQDMDADPGGPEF) is disordered. K393 is covalently cross-linked (Glycyl lysine isopeptide (Lys-Gly) (interchain with G-Cter in SUMO2)). The segment at 421–479 (FLKTPLGGSFLVYESFLYRREKAAGEKVYWTCRDQARMGCRSRAITQGRRVTVMRGHCH) adopts an FLYWCH-type 3 zinc-finger fold. S503 bears the Phosphoserine mark. The FLYWCH-type 4 zinc finger occupies 509–567 (FLKTPLGGSFLVYESFLYRREKAAGEKVYWTCRDQARMGCRSRAITQGRRVMVMRRHCH). Phosphoserine is present on S591. The FLYWCH-type 5 zinc finger occupies 600-658 (FLRTSLGGRFLVHESFLYRKEKAAGEKVYWMCRDQARLGCRSRAITQGHRIMVMRSHCH). K685 is covalently cross-linked (Glycyl lysine isopeptide (Lys-Gly) (interchain with G-Cter in SUMO2)). Residue S696 is modified to Phosphoserine.

In terms of assembly, interacts with CTNNB1 (when unphosphorylated), perhaps preventing interaction of CTNNB1 with TCF4, and thereby regulating transcription activation; phosphorylation of CTNNB1 may inhibit the interaction.

It is found in the nucleus. Its subcellular location is the chromosome. The protein resides in the centromere. Its function is as follows. Transcription cofactor. Negatively regulates transcription activation by catenin beta-1 CTNNB1, perhaps acting by competing with TCF4 for CTNNB1 binding. May play a role in DNA-damage response signaling. Binds specifically to DNA sequences at peri-centromeric chromatin loci. The sequence is that of FLYWCH-type zinc finger-containing protein 1 (FLYWCH1) from Homo sapiens (Human).